Consider the following 257-residue polypeptide: Acetyl-coenzyme A carboxylase carboxyl transferase subunit beta (257 aa).

Residues 5–257 form the CoA carboxyltransferase N-terminal domain; sequence VFTKCERCKQ…DLERLLGFVG (253 aa). Residues Cys-9, Cys-12, Cys-28, and Cys-31 each coordinate Zn(2+). The C4-type zinc-finger motif lies at 9 to 31; it reads CERCKQPVYEKDLRARFNVCPNC.

Belongs to the AccD/PCCB family. As to quaternary structure, acetyl-CoA carboxylase is a heterohexamer composed of biotin carboxyl carrier protein (AccB), biotin carboxylase (AccC) and two subunits each of ACCase subunit alpha (AccA) and ACCase subunit beta (AccD). Zn(2+) serves as cofactor.

Its subcellular location is the cytoplasm. It carries out the reaction N(6)-carboxybiotinyl-L-lysyl-[protein] + acetyl-CoA = N(6)-biotinyl-L-lysyl-[protein] + malonyl-CoA. The protein operates within lipid metabolism; malonyl-CoA biosynthesis; malonyl-CoA from acetyl-CoA: step 1/1. Functionally, component of the acetyl coenzyme A carboxylase (ACC) complex. Biotin carboxylase (BC) catalyzes the carboxylation of biotin on its carrier protein (BCCP) and then the CO(2) group is transferred by the transcarboxylase to acetyl-CoA to form malonyl-CoA. This chain is Acetyl-coenzyme A carboxylase carboxyl transferase subunit beta, found in Rubrobacter xylanophilus (strain DSM 9941 / JCM 11954 / NBRC 16129 / PRD-1).